The following is a 355-amino-acid chain: Uroporphyrinogen decarboxylase (355 aa).

Substrate contacts are provided by residues 27–31 (RQAGR), Asp-77, Tyr-154, Thr-209, and His-327.

The protein belongs to the uroporphyrinogen decarboxylase family. As to quaternary structure, homodimer.

It localises to the cytoplasm. It catalyses the reaction uroporphyrinogen III + 4 H(+) = coproporphyrinogen III + 4 CO2. Its pathway is porphyrin-containing compound metabolism; protoporphyrin-IX biosynthesis; coproporphyrinogen-III from 5-aminolevulinate: step 4/4. In terms of biological role, catalyzes the decarboxylation of four acetate groups of uroporphyrinogen-III to yield coproporphyrinogen-III. The sequence is that of Uroporphyrinogen decarboxylase from Yersinia enterocolitica serotype O:8 / biotype 1B (strain NCTC 13174 / 8081).